Consider the following 673-residue polypeptide: NADH-quinone oxidoreductase chain 3 (673 aa).

A 2Fe-2S ferredoxin-type domain is found at 5 to 90 (RKIKIDDTII…PSEIRTNSPM (86 aa)). [2Fe-2S] cluster-binding residues include Cys37, Cys48, Cys51, and Cys66. One can recognise a 4Fe-4S His(Cys)3-ligated-type domain in the interval 90 to 129 (MVKKAREGVMEFLLINHPLDCPICDQGGECDLQDQAMAYG). Positions 106, 110, 113, 119, 158, 161, 164, and 208 each coordinate [4Fe-4S] cluster. One can recognise a 4Fe-4S Mo/W bis-MGD-type domain in the interval 227–283 (LTKTESIDVMDALGSSIRIDTKGREVMRILPRNHDGVNEEWISDKTRFVWDGLRRQR).

Belongs to the complex I 75 kDa subunit family. As to quaternary structure, NDH-1 is composed of at least 14 different subunits, Nqo1 to Nqo14. The complex has a L-shaped structure, with the hydrophobic arm (subunits Nqo7, Nqo8, Nqo10 to Nqo14) embedded in the inner membrane and the hydrophilic peripheral arm (subunits Nqo1 to Nqo6, Nqo9) protruding into the bacterial cytoplasm. The hydrophilic domain contains all the redox centers. The cofactor is [2Fe-2S] cluster. Requires [4Fe-4S] cluster as cofactor.

The protein resides in the cell inner membrane. The catalysed reaction is a quinone + NADH + 5 H(+)(in) = a quinol + NAD(+) + 4 H(+)(out). Its function is as follows. NDH-1 shuttles electrons from NADH, via FMN and iron-sulfur (Fe-S) centers, to quinones in the respiratory chain. The immediate electron acceptor for the enzyme in this species is believed to be ubiquinone. Couples the redox reaction to proton translocation (for every two electrons transferred, four hydrogen ions are translocated across the cytoplasmic membrane), and thus conserves the redox energy in a proton gradient. This chain is NADH-quinone oxidoreductase chain 3, found in Paracoccus denitrificans.